A 335-amino-acid chain; its full sequence is MLP-like protein 28 (335 aa).

Belongs to the MLP family.

Functionally, can bind steroids (in vitro), and may also bind other types of hydrophobic ligands. This Arabidopsis thaliana (Mouse-ear cress) protein is MLP-like protein 28 (MLP28).